The chain runs to 80 residues: Small ribosomal subunit protein bS16 (80 aa).

It belongs to the bacterial ribosomal protein bS16 family.

The protein is Small ribosomal subunit protein bS16 of Blochmanniella pennsylvanica (strain BPEN).